Reading from the N-terminus, the 279-residue chain is 5'-nucleotidase SurE (279 aa).

Residues Asp-28, Asp-29, Ser-59, and Asn-113 each contribute to the a divalent metal cation site.

The protein belongs to the SurE nucleotidase family. A divalent metal cation serves as cofactor.

It localises to the cytoplasm. It carries out the reaction a ribonucleoside 5'-phosphate + H2O = a ribonucleoside + phosphate. Its function is as follows. Nucleotidase that shows phosphatase activity on nucleoside 5'-monophosphates. This Methanospirillum hungatei JF-1 (strain ATCC 27890 / DSM 864 / NBRC 100397 / JF-1) protein is 5'-nucleotidase SurE.